Reading from the N-terminus, the 555-residue chain is Embryonic protein DC-8 (555 aa).

A compositionally biased stretch (basic and acidic residues) spans 83–115 (RENTDYAYDKGREGGDVAAQKAEEAKEKAKMAK). Disordered stretches follow at residues 83-118 (RENT…KDTT) and 132-151 (KAEE…KEKA). 17 consecutive repeat copies span residues 97–114 (GDVA…AKMA), 115–125 (KDTTMGKAGEY), 126–140 (KDYT…KEKA), 141–154 (AQKA…AGEY), 155–176 (KNYT…AGEY), 177–191 (KDYA…KDTT), 192–205 (AQKA…TGEY), 206–216 (KDYAAQKAAEA), 217–237 (KVLA…DGEY), 238–259 (KDYA…TGEY), 260–281 (KDYA…AKEY), 282–303 (KEYA…TGEY), 304–325 (KDYS…TKEY), 326–343 (KDYT…TMEK), 344–358 (AKEA…TGEY), 359–376 (KDYA…TVEK), and 377–391 (AKEG…MTEL). The segment at 97-391 (GDVAAQKAEE…DTTVGKMTEL (295 aa)) is 17 X approximate tandem repeats. The interval 184–204 (AAEAKDTTAQKAAEAKEKTGE) is disordered. The span at 444 to 465 (LQEEGVKDEAKQRAEADRETAG) shows a compositional bias: basic and acidic residues. Residues 444-472 (LQEEGVKDEAKQRAEADRETAGDRGSAAK) form a disordered region.

It belongs to the LEA type 4 family.

The protein localises to the cytoplasm. It localises to the secreted. Its subcellular location is the cell wall. In terms of biological role, may play a role in late embryogeny. This Daucus carota (Wild carrot) protein is Embryonic protein DC-8.